The sequence spans 290 residues: Phosphate import ATP-binding protein PstB (290 aa).

The ABC transporter domain maps to Met-43–Ile-285. Gly-75 to Ser-82 contributes to the ATP binding site.

This sequence belongs to the ABC transporter superfamily. Phosphate importer (TC 3.A.1.7) family. As to quaternary structure, the complex is composed of two ATP-binding proteins (PstB), two transmembrane proteins (PstC and PstA) and a solute-binding protein (PstS).

It localises to the cell inner membrane. It carries out the reaction phosphate(out) + ATP + H2O = ADP + 2 phosphate(in) + H(+). Functionally, part of the ABC transporter complex PstSACB involved in phosphate import. Responsible for energy coupling to the transport system. This is Phosphate import ATP-binding protein PstB from Pseudoalteromonas atlantica (strain T6c / ATCC BAA-1087).